A 1201-amino-acid chain; its full sequence is Period circadian protein homolog 3 (1201 aa).

Residues 1–50 (MPRGEAPGPGRRGAKDEALGEESGERWSPEFHLQRKLADSSHSEQQDRNR) are disordered. Basic and acidic residues predominate over residues 13 to 50 (GAKDEALGEESGERWSPEFHLQRKLADSSHSEQQDRNR). Residues 55-64 (LIMVVQEMKK) carry the Nuclear export signal 1 motif. 2 consecutive PAS domains span residues 121–188 (IASE…RAQL) and 262–328 (YEAP…KVLK). Residues 337–380 (HSPIRFCTQNGDYIILDSSWSSFVNPWSRKISFIIGRHKVRTSP) enclose the PAC domain. The Nuclear export signal 3 motif lies at 403–412 (LQEQIYKLLL). Residues 555–760 (LKRKCISCTN…SSSNTGSGPR (206 aa)) form a CSNK1E binding domain region. Disordered stretches follow at residues 717–788 (YSYF…FPPA) and 881–923 (PSMS…RSSS). The segment covering 721–731 (QGDSTSKQTRS) has biased composition (polar residues). The Nuclear localization signal motif lies at 729-745 (TRSAGCRKGKHKRKKLP). Over residues 733 to 743 (GCRKGKHKRKK) the composition is skewed to basic residues. Composition is skewed to low complexity over residues 767 to 783 (AQPC…TSSP) and 881 to 890 (PSMSSAMSPT). Residues 900–911 (QRREEEKWEAQS) are compositionally biased toward basic and acidic residues. Position 919 is a phosphoserine (serine 919). The short motif at 925–932 (LQLNLLQE) is the Nuclear export signal 2 element. Residues 952 to 1067 (TEYCVTGNNG…GSAASGSSDS (116 aa)) are disordered. Polar residues-rich tracts occupy residues 957–976 (TGNN…STGS), 983–994 (SHPTASALSTGS), 1001–1012 (SHPTASALSTGS), and 1035–1050 (TPSH…GSPP). 5 repeat units span residues 965 to 982 (SPAT…RENP), 983 to 1000 (SHPT…MKNP), 1001 to 1018 (SHPT…MKNP), 1019 to 1036 (SHPT…SRTP), and 1037 to 1054 (SHPT…SESP). The segment at 965–1054 (SPATTGALST…STGSPPSESP (90 aa)) is 5 X 18 AA tandem repeats of S-[HP]-[AP]-T-[AT]-[GST]-[ATV]-L-S-[MT]-G-[LS]-P-P-[MRS]-[EKR]-[NST]-P. At serine 994 the chain carries Phosphoserine. Serine 1053 is subject to Phosphoserine. A compositionally biased stretch (low complexity) spans 1053–1067 (SPSRTGSAASGSSDS). A CRY binding domain region spans residues 1123-1201 (ERVKEVVLKE…CGQVLVEDSC (79 aa)).

As to quaternary structure, homodimer. Component of the circadian core oscillator, which includes the CRY proteins, CLOCK or NPAS2, BMAL1 or BMAL2, CSNK1D and/or CSNK1E, TIMELESS and the PER proteins. Interacts directly with PER1, PER2, CRY1, CRY2, and TIMELESS; interaction with CRY1 and CRY2 is weak and not rhythmic. Interacts with FBXW11 and BTRC. Phosphorylation by CSNK1E is weak and appears to require association with PER1 and translocation to the nucleus. In terms of processing, ubiquitinated.

The protein resides in the cytoplasm. It is found in the nucleus. Its function is as follows. Originally described as a core component of the circadian clock. The circadian clock, an internal time-keeping system, regulates various physiological processes through the generation of approximately 24 hour circadian rhythms in gene expression, which are translated into rhythms in metabolism and behavior. It is derived from the Latin roots 'circa' (about) and 'diem' (day) and acts as an important regulator of a wide array of physiological functions including metabolism, sleep, body temperature, blood pressure, endocrine, immune, cardiovascular, and renal function. Consists of two major components: the central clock, residing in the suprachiasmatic nucleus (SCN) of the brain, and the peripheral clocks that are present in nearly every tissue and organ system. Both the central and peripheral clocks can be reset by environmental cues, also known as Zeitgebers (German for 'timegivers'). The predominant Zeitgeber for the central clock is light, which is sensed by retina and signals directly to the SCN. The central clock entrains the peripheral clocks through neuronal and hormonal signals, body temperature and feeding-related cues, aligning all clocks with the external light/dark cycle. Circadian rhythms allow an organism to achieve temporal homeostasis with its environment at the molecular level by regulating gene expression to create a peak of protein expression once every 24 hours to control when a particular physiological process is most active with respect to the solar day. Transcription and translation of core clock components (CLOCK, NPAS2, BMAL1, BMAL2, PER1, PER2, PER3, CRY1 and CRY2) plays a critical role in rhythm generation, whereas delays imposed by post-translational modifications (PTMs) are important for determining the period (tau) of the rhythms (tau refers to the period of a rhythm and is the length, in time, of one complete cycle). A diurnal rhythm is synchronized with the day/night cycle, while the ultradian and infradian rhythms have a period shorter and longer than 24 hours, respectively. Disruptions in the circadian rhythms contribute to the pathology of cardiovascular diseases, cancer, metabolic syndromes and aging. A transcription/translation feedback loop (TTFL) forms the core of the molecular circadian clock mechanism. Transcription factors, CLOCK or NPAS2 and BMAL1 or BMAL2, form the positive limb of the feedback loop, act in the form of a heterodimer and activate the transcription of core clock genes and clock-controlled genes (involved in key metabolic processes), harboring E-box elements (5'-CACGTG-3') within their promoters. The core clock genes: PER1/2/3 and CRY1/2 which are transcriptional repressors form the negative limb of the feedback loop and interact with the CLOCK|NPAS2-BMAL1|BMAL2 heterodimer inhibiting its activity and thereby negatively regulating their own expression. This heterodimer also activates nuclear receptors NR1D1, NR1D2, RORA, RORB and RORG, which form a second feedback loop and which activate and repress BMAL1 transcription, respectively. Has a redundant role with the other PER proteins PER1 and PER2 and is not essential for the circadian rhythms maintenance. In contrast, plays an important role in sleep-wake timing and sleep homeostasis probably through the transcriptional regulation of sleep homeostasis-related genes, without influencing circadian parameters. Can bind heme. The protein is Period circadian protein homolog 3 (PER3) of Homo sapiens (Human).